The following is a 325-amino-acid chain: Structure-specific endonuclease subunit SLX1 (325 aa).

Residues 10–92 (ALYTVYILRS…NNPHLSMHIP (83 aa)) enclose the GIY-YIG domain. Residues 230–284 (CVVCREEMKSGEGLHAVCTHEGCDGVGHISCWSRSFLKNNDTGSILPVQGQCPMC) form an SLX1-type zinc finger.

The protein belongs to the SLX1 family. In terms of assembly, forms a heterodimer with SLX4. The cofactor is a divalent metal cation.

The protein localises to the nucleus. Its function is as follows. Catalytic subunit of the SLX1-SLX4 structure-specific endonuclease that resolves DNA secondary structures generated during DNA repair and recombination. Has endonuclease activity towards branched DNA substrates, introducing single-strand cuts in duplex DNA close to junctions with ss-DNA. This Chaetomium globosum (strain ATCC 6205 / CBS 148.51 / DSM 1962 / NBRC 6347 / NRRL 1970) (Soil fungus) protein is Structure-specific endonuclease subunit SLX1.